The chain runs to 253 residues: Probable transcriptional regulatory protein SynRCC307_1833 (253 aa).

The protein belongs to the TACO1 family.

It is found in the cytoplasm. The protein is Probable transcriptional regulatory protein SynRCC307_1833 of Synechococcus sp. (strain RCC307).